A 123-amino-acid polypeptide reads, in one-letter code: NADH-quinone oxidoreductase subunit A (123 aa).

3 helical membrane passes run 11–31, 68–88, and 93–113; these read YLPIAIFFGIAVLLSVLIMIL, LVAILFIIFDLEIAFLVPWAI, and IGKMGFFSMMFFLFVLIIGFI.

This sequence belongs to the complex I subunit 3 family. As to quaternary structure, NDH-1 is composed of 14 different subunits. Subunits NuoA, H, J, K, L, M, N constitute the membrane sector of the complex.

Its subcellular location is the cell inner membrane. The enzyme catalyses a quinone + NADH + 5 H(+)(in) = a quinol + NAD(+) + 4 H(+)(out). In terms of biological role, NDH-1 shuttles electrons from NADH, via FMN and iron-sulfur (Fe-S) centers, to quinones in the respiratory chain. The immediate electron acceptor for the enzyme in this species is believed to be ubiquinone. Couples the redox reaction to proton translocation (for every two electrons transferred, four hydrogen ions are translocated across the cytoplasmic membrane), and thus conserves the redox energy in a proton gradient. The protein is NADH-quinone oxidoreductase subunit A of Rickettsia prowazekii (strain Madrid E).